The primary structure comprises 712 residues: Satratoxin biosynthesis SC3 cluster transcription factor SAT20 (712 aa).

Polar residues-rich tracts occupy residues Met1 to Ser10, Cys25 to Asn36, Ser131 to Leu145, and Ser269 to Gly282. Disordered stretches follow at residues Met1–Gln43, Ser115–Leu145, and Pro264–Arg294. Residues Cys306 to Cys339 constitute a DNA-binding region (zn(2)-C6 fungal-type). A coiled-coil region spans residues Gln530–His560.

Its subcellular location is the nucleus. Transcriptional regulator that may regulate the expression of the satratoxin biosynthesis SC3 cluster, one of the 3 clusters involved in the biosynthesis of satratoxins, trichothecene mycotoxins that are associated with human food poisonings. In Stachybotrys chartarum (strain CBS 109288 / IBT 7711) (Toxic black mold), this protein is Satratoxin biosynthesis SC3 cluster transcription factor SAT20.